Here is a 133-residue protein sequence, read N- to C-terminus: uncharacterized protein (133 aa).

The signal sequence occupies residues 1 to 23 (MSRKIIPALTIFFGPILILTAIT). The tract at residues 82-133 (ESIKNQNSLNKEKQQQQQQQQQQQQQQQQQQQQQQKPNTPPTPLTTPSTPKK) is disordered. Positions 96–118 (QQQQQQQQQQQQQQQQQQQQQKP) are enriched in low complexity.

The protein resides in the secreted. This is an uncharacterized protein from Dictyostelium discoideum (Social amoeba).